The primary structure comprises 344 residues: MASSDFDGILLGMGNPLLDVSAVVDQQFLDKYDIKLNNAILAEDKHLPMYDEMSQKFNVEYIAGGATQNSIKVAQWMLQVPGATSYMGSIGKDKYGEAMKKDATAAGVYVHYYEDEATPTGTCGVCVLGGERSLIANLSAANCYKVEHLKKPENWALVEKAKFYYIAGFFLTVSPESIQLVREHAAANNKVFTMNLSAPFICEFFKDVQEKCLPYMDYIFGNETEARTFSRVHGWETDDVEQIAIKMSQLPKASGTYKRTTVITQGADPVVVAEDGKVKKYPVIPLPKEKLVDTNGAGDAFVGGFLSQLVHGKGIEECVRAGCYASNVVIQRSGCTYPEKPDFN.

Residue D299 is part of the active site.

The protein belongs to the carbohydrate kinase PfkB family. As to quaternary structure, interacts with the begomovirus AL2 protein and the curtovirus L2 protein. The cofactor is Mg(2+). Widely expressed.

The enzyme catalyses adenosine + ATP = AMP + ADP + H(+). It participates in purine metabolism; AMP biosynthesis via salvage pathway; AMP from adenosine: step 1/1. Its activity is regulated as follows. Inactivated by the begomovirus AL2 protein or the curtovirus L2 protein. ATP dependent phosphorylation of adenosine and other related nucleoside analogs to monophosphate derivatives. Essential to sustain methyl recycling. The protein is Adenosine kinase 1 of Arabidopsis thaliana (Mouse-ear cress).